The sequence spans 429 residues: Aspartate--tRNA(Asp/Asn) ligase (429 aa).

E167 is a binding site for L-aspartate. The segment at 189-192 (QLYK) is aspartate. R210 lines the L-aspartate pocket. ATP contacts are provided by residues 210-212 (RAE) and E352. 2 residues coordinate Mg(2+): E352 and S355. Residues S355 and R359 each coordinate L-aspartate. ATP is bound at residue 400 to 403 (GLAR).

The protein belongs to the class-II aminoacyl-tRNA synthetase family. Type 2 subfamily. In terms of assembly, homodimer. The cofactor is Mg(2+).

Its subcellular location is the cytoplasm. It catalyses the reaction tRNA(Asx) + L-aspartate + ATP = L-aspartyl-tRNA(Asx) + AMP + diphosphate. Functionally, aspartyl-tRNA synthetase with relaxed tRNA specificity since it is able to aspartylate not only its cognate tRNA(Asp) but also tRNA(Asn). Reaction proceeds in two steps: L-aspartate is first activated by ATP to form Asp-AMP and then transferred to the acceptor end of tRNA(Asp/Asn). This is Aspartate--tRNA(Asp/Asn) ligase from Sulfurisphaera tokodaii (strain DSM 16993 / JCM 10545 / NBRC 100140 / 7) (Sulfolobus tokodaii).